The chain runs to 132 residues: Small ribosomal subunit protein bS6 (132 aa).

Positions 96 to 132 are disordered; that stretch reads HAEGPSIQMQKRDERERGDRGDRPDRGDRGERGGFRR. The span at 105–132 shows a compositional bias: basic and acidic residues; that stretch reads QKRDERERGDRGDRPDRGDRGERGGFRR.

The protein belongs to the bacterial ribosomal protein bS6 family.

In terms of biological role, binds together with bS18 to 16S ribosomal RNA. The sequence is that of Small ribosomal subunit protein bS6 from Cereibacter sphaeroides (strain ATCC 17025 / ATH 2.4.3) (Rhodobacter sphaeroides).